The chain runs to 24 residues: Brevinin-1Sa (24 aa).

Cys-18 and Cys-24 are disulfide-bonded.

Expressed by the skin glands.

The protein resides in the secreted. Functionally, antibacterial activity against Gram-negative bacterium E.coli. The sequence is that of Brevinin-1Sa from Lithobates sphenocephalus (Southern leopard frog).